The sequence spans 1170 residues: Thrombospondin-2 (1170 aa).

The signal sequence occupies residues 1–18 (MLWPLLLLALWAWPSAQA). A Laminin G-like domain is found at 19 to 215 (GDQDEDTAFD…LQNVYLVFEN (197 aa)). Positions 19 to 232 (GDQDEDTAFD…KKGCQQSQGA (214 aa)) are heparin-binding. 3 N-linked (GlcNAc...) asparagine glycosylation sites follow: Asn151, Asn316, and Asn330. Residues 318–375 (SACWQDGRFFAENETWVVDSCTKCTCKKFKTVCHQISCPPATCADPWFVEGECCPSCV) form the VWFC domain. TSP type-1 domains follow at residues 379–429 (EEGW…GRCD), 435–490 (DGGW…PPCP), and 492–547 (DGRW…KSCP). 26 cysteine pairs are disulfide-bonded: Cys391–Cys423, Cys395–Cys428, Cys406–Cys413, Cys447–Cys484, Cys451–Cys489, Cys462–Cys474, Cys504–Cys541, Cys508–Cys546, Cys519–Cys531, Cys551–Cys562, Cys556–Cys572, Cys575–Cys586, Cys592–Cys608, Cys599–Cys617, Cys620–Cys644, Cys650–Cys663, Cys657–Cys676, Cys678–Cys689, Cys705–Cys713, Cys718–Cys738, Cys754–Cys774, Cys777–Cys797, Cys813–Cys833, Cys836–Cys856, Cys874–Cys894, and Cys910–Cys930. An N-linked (GlcNAc...) asparagine glycan is attached at Asn455. In terms of domain architecture, EGF-like 1 spans 547–587 (PIDGCLSNPCFPGAECSSFPDGSWSCGSCPGGFLGNGTHCE). Residue Asn582 is glycosylated (N-linked (GlcNAc...) asparagine). The EGF-like 2 domain maps to 646–690 (PENPCKDKTHSCHRHAECIYLGHFSDPMYKCECQTGYAGDGLICG). TSP type-3 repeat units follow at residues 691–726 (EDSD…NSGQ), 727–762 (EDFD…NPRQ), 763–785 (FDYD…NPAQ), 786–821 (IDTD…NTDQ), 822–844 (RDTD…NPDQ), 845–882 (TDVD…NANQ), 883–918 (ADHD…NPDQ), and 919–954 (EDSD…AISE). Asn708 carries N-linked (GlcNAc...) asparagine glycosylation. The disordered stretch occupies residues 731–750 (KDGIGDACDDDDDNDGVSDE). Acidic residues predominate over residues 737–747 (ACDDDDDNDGV). The interval 841–944 (NPDQTDVDND…DNDSIPDIDD (104 aa)) is disordered. 2 stretches are compositionally biased toward acidic residues: residues 845 to 864 (TDVD…DIDE) and 894 to 903 (CDSDDDNDGI). Positions 923 to 933 (GDRRGDACKDD) are enriched in basic and acidic residues. A Cell attachment site motif is present at residues 926-928 (RGD). A compositionally biased stretch (acidic residues) spans 934–944 (FDNDSIPDIDD). N-linked (GlcNAc...) asparagine glycosylation is found at Asn936 and Asn1067. A disulfide bond links Cys946 and Cys1167. A TSP C-terminal domain is found at 958–1170 (RNFQMVHLDP…SDLKYECRDV (213 aa)).

The protein belongs to the thrombospondin family. In terms of assembly, homotrimer; disulfide-linked. Can bind to fibrinogen, fibronectin, laminin and type V collagen. Interacts (via the TSP type I repeats) with CD36; the interaction conveys an antiangiogenic effect. Interacts (via the TSP type I repeats) with HRG; the interaction blocks the antiangiogenic effect of THBS2 with CD36.

Functionally, adhesive glycoprotein that mediates cell-to-cell and cell-to-matrix interactions. Ligand for CD36 mediating antiangiogenic properties. The protein is Thrombospondin-2 (THBS2) of Bos taurus (Bovine).